We begin with the raw amino-acid sequence, 493 residues long: Aspartyl/glutamyl-tRNA(Asn/Gln) amidotransferase subunit B (493 aa).

Positions 473–493 (KSGGKANPKQAADLVNKRLTE) are disordered.

Belongs to the GatB/GatE family. GatB subfamily. Heterotrimer of A, B and C subunits.

It carries out the reaction L-glutamyl-tRNA(Gln) + L-glutamine + ATP + H2O = L-glutaminyl-tRNA(Gln) + L-glutamate + ADP + phosphate + H(+). The enzyme catalyses L-aspartyl-tRNA(Asn) + L-glutamine + ATP + H2O = L-asparaginyl-tRNA(Asn) + L-glutamate + ADP + phosphate + 2 H(+). In terms of biological role, allows the formation of correctly charged Asn-tRNA(Asn) or Gln-tRNA(Gln) through the transamidation of misacylated Asp-tRNA(Asn) or Glu-tRNA(Gln) in organisms which lack either or both of asparaginyl-tRNA or glutaminyl-tRNA synthetases. The reaction takes place in the presence of glutamine and ATP through an activated phospho-Asp-tRNA(Asn) or phospho-Glu-tRNA(Gln). The protein is Aspartyl/glutamyl-tRNA(Asn/Gln) amidotransferase subunit B of Treponema denticola (strain ATCC 35405 / DSM 14222 / CIP 103919 / JCM 8153 / KCTC 15104).